We begin with the raw amino-acid sequence, 267 residues long: tRNA pseudouridine synthase A (267 aa).

Asp54 (nucleophile) is an active-site residue. Tyr114 is a substrate binding site.

Belongs to the tRNA pseudouridine synthase TruA family. In terms of assembly, homodimer.

It catalyses the reaction uridine(38/39/40) in tRNA = pseudouridine(38/39/40) in tRNA. In terms of biological role, formation of pseudouridine at positions 38, 39 and 40 in the anticodon stem and loop of transfer RNAs. In Tropheryma whipplei (strain TW08/27) (Whipple's bacillus), this protein is tRNA pseudouridine synthase A.